The chain runs to 526 residues: Peptide chain release factor 3 (526 aa).

The tr-type G domain maps to 9 to 277 (DKRRTFAIIS…GIVEWAPVPQ (269 aa)). GTP contacts are provided by residues 18–25 (SHPDAGKT), 86–90 (DTPGH), and 140–143 (NKLD).

It belongs to the TRAFAC class translation factor GTPase superfamily. Classic translation factor GTPase family. PrfC subfamily.

It is found in the cytoplasm. Its function is as follows. Increases the formation of ribosomal termination complexes and stimulates activities of RF-1 and RF-2. It binds guanine nucleotides and has strong preference for UGA stop codons. It may interact directly with the ribosome. The stimulation of RF-1 and RF-2 is significantly reduced by GTP and GDP, but not by GMP. The protein is Peptide chain release factor 3 of Shewanella pealeana (strain ATCC 700345 / ANG-SQ1).